A 400-amino-acid polypeptide reads, in one-letter code: Succinate--glutarate CoA-transferase (400 aa).

The Nucleophile role is filled by D181.

It belongs to the CoA-transferase III family.

It catalyses the reaction glutarate + succinyl-CoA = glutaryl-CoA + succinate. The protein operates within amino-acid degradation. It functions in the pathway cofactor biosynthesis; biotin biosynthesis. Its function is as follows. Is involved in L-lysine degradation and provides glutaryl-CoA for biotin synthesis. Catalyzes the conversion of glutarate to glutaryl-CoA via the transfer of CoA from succinyl-CoA. In Agrobacterium fabrum (strain C58 / ATCC 33970) (Agrobacterium tumefaciens (strain C58)), this protein is Succinate--glutarate CoA-transferase.